The following is a 422-amino-acid chain: UDP-N-acetylglucosamine 1-carboxyvinyltransferase (422 aa).

23–24 is a phosphoenolpyruvate binding site; sequence KN. Arginine 92 is a binding site for UDP-N-acetyl-alpha-D-glucosamine. The active-site Proton donor is cysteine 116. The residue at position 116 (cysteine 116) is a 2-(S-cysteinyl)pyruvic acid O-phosphothioketal. Residues 121-125, 161-164, aspartate 306, and isoleucine 328 contribute to the UDP-N-acetyl-alpha-D-glucosamine site; these read RPVDL and KVSV.

The protein belongs to the EPSP synthase family. MurA subfamily.

The protein localises to the cytoplasm. It carries out the reaction phosphoenolpyruvate + UDP-N-acetyl-alpha-D-glucosamine = UDP-N-acetyl-3-O-(1-carboxyvinyl)-alpha-D-glucosamine + phosphate. Its pathway is cell wall biogenesis; peptidoglycan biosynthesis. Functionally, cell wall formation. Adds enolpyruvyl to UDP-N-acetylglucosamine. The chain is UDP-N-acetylglucosamine 1-carboxyvinyltransferase from Aliivibrio fischeri (strain ATCC 700601 / ES114) (Vibrio fischeri).